The following is a 430-amino-acid chain: Mitochondrial distribution and morphology protein 10 (430 aa).

Polar residues predominate over residues 215–234; it reads SSSAMNPPSGTSASETNGSG. Disordered regions lie at residues 215–237 and 339–393; these read SSSA…GPSV and LGAN…GPKE.

This sequence belongs to the MDM10 family. In terms of assembly, component of the ER-mitochondria encounter structure (ERMES) or MDM complex, composed of MMM1, MDM10, MDM12 and MDM34. Associates with the mitochondrial outer membrane sorting assembly machinery SAM(core) complex.

The protein resides in the mitochondrion outer membrane. In terms of biological role, component of the ERMES/MDM complex, which serves as a molecular tether to connect the endoplasmic reticulum and mitochondria. Components of this complex are involved in the control of mitochondrial shape and protein biogenesis and may function in phospholipid exchange. MDM10 is involved in the late assembly steps of the general translocase of the mitochondrial outer membrane (TOM complex). Functions in the TOM40-specific route of the assembly of outer membrane beta-barrel proteins, including the association of TOM40 with the receptor TOM22 and small TOM proteins. Can associate with the SAM(core) complex as well as the MDM12-MMM1 complex, both involved in late steps of the major beta-barrel assembly pathway, that is responsible for biogenesis of all outer membrane beta-barrel proteins. May act as a switch that shuttles between both complexes and channels precursor proteins into the TOM40-specific pathway. Plays a role in mitochondrial morphology and in the inheritance of mitochondria. The protein is Mitochondrial distribution and morphology protein 10 of Chaetomium globosum (strain ATCC 6205 / CBS 148.51 / DSM 1962 / NBRC 6347 / NRRL 1970) (Soil fungus).